A 293-amino-acid polypeptide reads, in one-letter code: Heterogeneous nuclear ribonucleoprotein C-like 4 (293 aa).

Residues 16 to 87 (SRVFIGNLNT…QVVDINLAAE (72 aa)) enclose the RRM domain. 2 disordered regions span residues 140 to 177 (VVPS…KLKG) and 208 to 293 (HCKQ…QDDS). Residues 177–208 (GDDLQAIKQELTQIKQKVDSLLENLEKIEKEH) adopt a coiled-coil conformation. 2 stretches are compositionally biased toward basic and acidic residues: residues 208–222 (HCKQ…KSEE) and 229–240 (SKKDKTHVKMES). Positions 242–263 (GGADDSVEEGDLLCDDDNEDQG) are enriched in acidic residues. Positions 269–293 (LIKDDEKGAEEGEDDRDRANGQDDS) are enriched in basic and acidic residues.

The protein belongs to the RRM HNRPC family. RALY subfamily.

It localises to the nucleus. This Homo sapiens (Human) protein is Heterogeneous nuclear ribonucleoprotein C-like 4.